Consider the following 146-residue polypeptide: ATP synthase F(0) complex subunit C2, mitochondrial (146 aa).

A mitochondrion-targeting transit peptide spans 1–71; the sequence is MYACSKFVST…RSFQTSAISR (71 aa). The helical transmembrane segment at 87–107 threads the bilayer; sequence VGVAGSGAGIGTVFGSLIIGY. Lys114 is subject to N6,N6,N6-trimethyllysine. The chain crosses the membrane as a helical span at residues 122–142; sequence ILGFALSEAMGLFCLMVAFLI.

This sequence belongs to the ATPase C chain family. As to quaternary structure, F-type ATPases have 2 components, CF(1) - the catalytic core - and CF(0) - the membrane proton channel. CF(1) has five subunits: alpha(3), beta(3), gamma(1), delta(1), epsilon(1). CF(0) has three main subunits: a, b and c. Interacts with DNAJC30; interaction is direct. In terms of processing, trimethylated by ATPSCKMT at Lys-114. Methylation is required for proper incorporation of the C subunit into the ATP synthase complex and mitochondrial respiration.

It localises to the mitochondrion membrane. Mitochondrial membrane ATP synthase (F(1)F(0) ATP synthase or Complex V) produces ATP from ADP in the presence of a proton gradient across the membrane which is generated by electron transport complexes of the respiratory chain. F-type ATPases consist of two structural domains, F(1) - containing the extramembraneous catalytic core and F(0) - containing the membrane proton channel, linked together by a central stalk and a peripheral stalk. During catalysis, ATP synthesis in the catalytic domain of F(1) is coupled via a rotary mechanism of the central stalk subunits to proton translocation. Part of the complex F(0) domain. A homomeric c-ring of probably 10 subunits is part of the complex rotary element. The chain is ATP synthase F(0) complex subunit C2, mitochondrial from Mus musculus (Mouse).